Reading from the N-terminus, the 313-residue chain is UbiA prenyltransferase claS (313 aa).

Helical transmembrane passes span 30-52 (FAGT…RALL) and 57-79 (TFGT…GCIW). The NDxxDxxxD motif lies at 81 to 88 (DILDQDFD). 2 residues coordinate Mg(2+): Asp-84 and Asp-88. Transmembrane regions (helical) follow at residues 99 to 121 (IASG…FILM), 131 to 148 (AWMI…IYPL), and 155 to 177 (WPQA…YTTG). Mg(2+)-binding residues include Asp-205 and Asp-209. A DxxxD motif is present at residues 205–209 (DKKDD). The YxxxK signature appears at 205–209 (DKKDD). Helical transmembrane passes span 227–247 (PVLS…GILN), 250–270 (ELPY…TQLW), and 293–313 (AIVW…GAIM).

It belongs to the UbiA prenyltransferase family. The cofactor is Mg(2+).

Its subcellular location is the membrane. It catalyses the reaction hydroquinone + (2E)-geranyl diphosphate = (2E)-geranylhydroquinone + diphosphate. The protein operates within secondary metabolite biosynthesis; terpenoid biosynthesis. In terms of biological role, prenyltransferase; part of the gene cluster that mediates the biosynthesis of clavilactone A, a meroterpenoid that features a unique benzo-fused ten-membered carbocyclic ring unit with an alpha,beta-epoxy-gamma-lactone moiety, forming an intriguing 10/5/3 tricyclic nested skeleton. ClaR, ClaS and ClaT are sufficient to produce clavilactone A. Within the pathway, claS acts as an atypical UbiA prenyltransferase that transfers geranyl pyrophosphate (GPP) to hydroquinone (HYQ) instead of p-hydroxybenzoic acid (PHB), producing the first intermediate geranylhydroquinone. The cytochrome P450 monooxygenase claR then catalyzes the diradical coupling reaction between the intramolecular hydroquinone and allyl moieties to form the benzo-fused ten-membered carbocyclic ring unit of wigantol. Finally the cytochrome P450 monooxygenase claT exquisitely and stereoselectively assembles the alpha,beta-epoxy-gamma-lactone moiety, producing clavilactone A via arnebinol A. In Ampulloclitocybe clavipes (Club foot), this protein is UbiA prenyltransferase claS.